A 317-amino-acid polypeptide reads, in one-letter code: Porphobilinogen deaminase (317 aa).

C242 carries the S-(dipyrrolylmethanemethyl)cysteine modification.

This sequence belongs to the HMBS family. Monomer. The cofactor is dipyrromethane.

It carries out the reaction 4 porphobilinogen + H2O = hydroxymethylbilane + 4 NH4(+). It functions in the pathway porphyrin-containing compound metabolism; protoporphyrin-IX biosynthesis; coproporphyrinogen-III from 5-aminolevulinate: step 2/4. Its function is as follows. Tetrapolymerization of the monopyrrole PBG into the hydroxymethylbilane pre-uroporphyrinogen in several discrete steps. This chain is Porphobilinogen deaminase, found in Colwellia psychrerythraea (strain 34H / ATCC BAA-681) (Vibrio psychroerythus).